A 516-amino-acid polypeptide reads, in one-letter code: Immunoglobulin G-binding protein A (516 aa).

Residues 1–36 form the signal peptide; that stretch reads MKKKNIYSIRKLGVGIASVTLGTLLISGGVTPAANA. The YSIRK-G/S signaling motif motif lies at 7–18; it reads YSIRKLGVGIAS. An Immunoglobulin-binding region E repeat occupies 37 to 92; the sequence is AQHDEAQQNAFYQVLNMPNLNADQRNGFIQSLKDDPSQSANVLGEAQKLNDSQAPK. The stretch at 93-153 is one Immunoglobulin-binding region D repeat; that stretch reads ADAQQNNFNK…KKLNESQAPK (61 aa). One copy of the Immunoglobulin-binding region A repeat lies at 154–211; it reads ADNNFNKEQQNAFYEILNMPNLNEEQRNGFIQSLKDDPSQSANLLSEAKKLNESQAPK. One copy of the Immunoglobulin-binding region B repeat lies at 212–269; the sequence is ADNKFNKEQQNAFYEILHLPNLNEEQRNGFIQSLKDDPSQSANLLAEAKKLNDAQAPK. One copy of the Immunoglobulin-binding region C repeat lies at 270–327; that stretch reads ADNKFNKEQQNAFYEILHLPNLTEEQRNGFIQSLKDDPSVSKEILAEAKKLNDAQAPK. Basic and acidic residues predominate over residues 318 to 420; it reads KKLNDAQAPK…GNKPGKEDGN (103 aa). 2 disordered regions span residues 318–440 and 467–487; these read KKLN…ANGT and KKQPANHADANKAQALPETGE. 11 tandem repeats follow at residues 333–340, 341–348, 349–356, 357–364, 365–372, 373–380, 381–388, 389–396, 397–404, 405–412, and 413–420. Positions 333–420 are 11 X 8 AA approximate tandem repeats; it reads KPGKEDNNKP…GNKPGKEDGN (88 aa). The region spanning 421-465 is the LysM domain; that stretch reads GVHVVKPGDTVNDIAKANGTTADKIAADNKLADKNMIKPGQELVV. The LPXTG sorting signal motif lies at 482-486; it reads LPETG. Residue T485 is modified to Pentaglycyl murein peptidoglycan amidated threonine. Residues 486 to 516 constitute a propeptide, removed by sortase A; the sequence is GEENPFIGTTVFGGLSLALGAALLAGRRREL.

This sequence belongs to the immunoglobulin-binding protein SpA family. Interacts with host TNFRSF1A; this interaction leads to the stimulation of both surface expression and shedding of TNFRSF1A.

It localises to the secreted. The protein resides in the cell wall. Its function is as follows. Plays a role in the inhibition of the host innate and adaptive immune responses. Possesses five immunoglobulin-binding domains that capture both the fragment crystallizable region (Fc region) and the Fab region (part of Ig that identifies antigen) of immunoglobulins. In turn, Staphylococcus aureus is protected from phagocytic killing via inhibition of Ig Fc region. In addition, the host elicited B-cell response is prevented due to a decrease of antibody-secreting cell proliferation that enter the bone marrow, thereby decreasing long-term antibody production. Inhibits osteogenesis by preventing osteoblast proliferation and expression of alkaline phosphatase, type I collagen, osteopontin and osteocalcin. Acts directly as a pro-inflammatory factor in the lung through its ability to bind and activate tumor necrosis factor alpha receptor 1/TNFRSF1A. In Staphylococcus aureus (strain NCTC 8325 / PS 47), this protein is Immunoglobulin G-binding protein A (spa).